We begin with the raw amino-acid sequence, 396 residues long: Ribosomal RNA large subunit methyltransferase I (396 aa).

One can recognise a PUA domain in the interval 2-81 (SVRLVLAKGR…ESIDIAFFSR (80 aa)).

Belongs to the methyltransferase superfamily. RlmI family.

Its subcellular location is the cytoplasm. It carries out the reaction cytidine(1962) in 23S rRNA + S-adenosyl-L-methionine = 5-methylcytidine(1962) in 23S rRNA + S-adenosyl-L-homocysteine + H(+). In terms of biological role, specifically methylates the cytosine at position 1962 (m5C1962) of 23S rRNA. The sequence is that of Ribosomal RNA large subunit methyltransferase I from Escherichia coli (strain K12 / MC4100 / BW2952).